The sequence spans 253 residues: Triosephosphate isomerase, cytosolic (253 aa).

Asparagine 10 and lysine 12 together coordinate substrate. Histidine 96 serves as the catalytic Electrophile. Glutamate 166 serves as the catalytic Proton acceptor.

This sequence belongs to the triosephosphate isomerase family. As to quaternary structure, homodimer.

It is found in the cytoplasm. It carries out the reaction D-glyceraldehyde 3-phosphate = dihydroxyacetone phosphate. Its pathway is carbohydrate biosynthesis; gluconeogenesis. The protein operates within carbohydrate degradation; glycolysis; D-glyceraldehyde 3-phosphate from glycerone phosphate: step 1/1. In Coptis japonica (Japanese goldthread), this protein is Triosephosphate isomerase, cytosolic.